The sequence spans 88 residues: MKPGIHPDYREVVFQDMSNGFKFITRSTIQTRETIEHEGKTYPLAKIEVSSESHSFYTGQQKIMDTAGRVEKFKNKFGARANGKAAAK.

The protein belongs to the bacterial ribosomal protein bL31 family. Type B subfamily. As to quaternary structure, part of the 50S ribosomal subunit.

This is Large ribosomal subunit protein bL31B from Burkholderia orbicola (strain MC0-3).